We begin with the raw amino-acid sequence, 366 residues long: uncharacterized protein (366 aa).

The next 6 helical transmembrane spans lie at 30-50, 66-86, 136-156, 162-182, 198-218, and 225-245; these read FWTY…AVGI, IIIA…IIVI, IFIS…GYLA, IILF…LDLL, IGVV…IYDI, and YIPE…IIDV.

It is found in the cell membrane. This is an uncharacterized protein from Methanocaldococcus jannaschii (strain ATCC 43067 / DSM 2661 / JAL-1 / JCM 10045 / NBRC 100440) (Methanococcus jannaschii).